A 357-amino-acid chain; its full sequence is Probable butyrate kinase 1 (357 aa).

This sequence belongs to the acetokinase family.

The protein resides in the cytoplasm. It carries out the reaction butanoate + ATP = butanoyl phosphate + ADP. The chain is Probable butyrate kinase 1 from Thermotoga maritima (strain ATCC 43589 / DSM 3109 / JCM 10099 / NBRC 100826 / MSB8).